A 630-amino-acid polypeptide reads, in one-letter code: Plastin-3 (630 aa).

2 EF-hand domains span residues Asp12 to Pro47 and Lys52 to Ser87. Residues Asp25, Asn27, Asn29, Glu36, Asp65, Asn67, Asp69, Lys71, and Glu76 each coordinate Ca(2+). 2 actin-binding regions span residues Thr109–Lys382 and Pro383–Met627. 2 Calponin-homology (CH) domains span residues Glu123 to Leu239 and Leu267 to Pro378. A phosphoserine mark is found at Ser268, Ser293, Ser326, and Ser339. At Thr391 the chain carries Phosphothreonine. Calponin-homology (CH) domains are found at residues Thr397–Thr506 and Lys518–Met627.

As to quaternary structure, monomer.

The protein localises to the cytoplasm. Actin-bundling protein. This Bos taurus (Bovine) protein is Plastin-3 (PLS3).